Consider the following 142-residue polypeptide: Large ribosomal subunit protein uL13 (142 aa).

The protein belongs to the universal ribosomal protein uL13 family. Part of the 50S ribosomal subunit.

This protein is one of the early assembly proteins of the 50S ribosomal subunit, although it is not seen to bind rRNA by itself. It is important during the early stages of 50S assembly. The chain is Large ribosomal subunit protein uL13 from Ectopseudomonas mendocina (strain ymp) (Pseudomonas mendocina).